The chain runs to 499 residues: Apolipoprotein N-acyltransferase (499 aa).

6 helical membrane-spanning segments follow: residues 18 to 38, 50 to 70, 82 to 102, 105 to 125, 156 to 176, and 182 to 202; these read FSPY…LIIT, LGFL…YISI, IIII…FVIL, FFFP…AWMI, PIIG…MCVL, and SYYP…LNFF. Residues 217–461 form the CN hydrolase domain; the sequence is IQGNISQHTY…NDFLLEEVFS (245 aa). Glu257 serves as the catalytic Proton acceptor. Residue Lys320 is part of the active site. Residue Cys372 is the Nucleophile of the active site. The chain crosses the membrane as a helical span at residues 476–496; the sequence is LLFFSIICFIISFFIKIKLIF.

The protein belongs to the CN hydrolase family. Apolipoprotein N-acyltransferase subfamily.

The protein localises to the cell membrane. The catalysed reaction is N-terminal S-1,2-diacyl-sn-glyceryl-L-cysteinyl-[lipoprotein] + a glycerophospholipid = N-acyl-S-1,2-diacyl-sn-glyceryl-L-cysteinyl-[lipoprotein] + a 2-acyl-sn-glycero-3-phospholipid + H(+). It functions in the pathway protein modification; lipoprotein biosynthesis (N-acyl transfer). Its function is as follows. Catalyzes the phospholipid dependent N-acylation of the N-terminal cysteine of apolipoprotein, the last step in lipoprotein maturation. The sequence is that of Apolipoprotein N-acyltransferase from Wigglesworthia glossinidia brevipalpis.